A 324-amino-acid chain; its full sequence is Serine/threonine-protein phosphatase PP1 isozyme 8 (324 aa).

Mn(2+)-binding residues include Asp66, His68, Asp94, and Asn126. Catalysis depends on His127, which acts as the Proton donor. Mn(2+) is bound by residues His175 and His250.

This sequence belongs to the PPP phosphatase family. PP-1 subfamily. It depends on Mn(2+) as a cofactor. As to expression, expressed in roots, rosettes and flowers.

It localises to the nucleus. It is found in the cytoplasm. It carries out the reaction O-phospho-L-seryl-[protein] + H2O = L-seryl-[protein] + phosphate. It catalyses the reaction O-phospho-L-threonyl-[protein] + H2O = L-threonyl-[protein] + phosphate. With respect to regulation, phosphatase activity is strongly reduced by the protein phosphatase inhibitor 2 (I-2). Serine/threonine-protein phosphatase that possesses phosphatase activity toward para-nitrophenyl phosphate (pNPP) in vitro. This Arabidopsis thaliana (Mouse-ear cress) protein is Serine/threonine-protein phosphatase PP1 isozyme 8.